The primary structure comprises 234 residues: Rhodanese-like domain-containing protein 9, chloroplastic (234 aa).

A chloroplast-targeting transit peptide spans 1-47; that stretch reads MAGIISPSPTALYFTSNVGGRRLKAVSWAGKSVSGNVIRRRSLRIAA. The 124-residue stretch at 62–185 folds into the Rhodanese domain; that stretch reads AEEGYSVVDV…VKPGTFESVG (124 aa). Cys145 functions as the Cysteine persulfide intermediate in the catalytic mechanism. Residues 204-222 traverse the membrane as a helical segment; it reads ISAVLGTVLVCAYLFIQFF.

It is found in the plastid. It localises to the chloroplast. The protein localises to the membrane. This Arabidopsis thaliana (Mouse-ear cress) protein is Rhodanese-like domain-containing protein 9, chloroplastic (STR9).